We begin with the raw amino-acid sequence, 471 residues long: Abscisic acid 8'-hydroxylase 1 (471 aa).

The chain crosses the membrane as a helical span at residues 1-21; the sequence is MGAFLLFVCVLAPFLLVCAVR. Cys-415 is a binding site for heme.

The protein belongs to the cytochrome P450 family. Heme is required as a cofactor. As to expression, in seedlings and expanding leaves.

The protein localises to the membrane. It catalyses the reaction 2-cis-(+)-abscisate + reduced [NADPH--hemoprotein reductase] + O2 = (+)-8'-hydroxyabscisate + oxidized [NADPH--hemoprotein reductase] + H2O + H(+). The protein operates within plant hormone degradation; abscisic acid degradation. In terms of biological role, involved in the oxidative degradation of abscisic acid. This is Abscisic acid 8'-hydroxylase 1 (CYP707A5) from Oryza sativa subsp. indica (Rice).